Reading from the N-terminus, the 422-residue chain is Serine hydroxymethyltransferase (422 aa).

(6S)-5,6,7,8-tetrahydrofolate-binding positions include L118 and 122-124 (GHL). K227 carries the post-translational modification N6-(pyridoxal phosphate)lysine. (6S)-5,6,7,8-tetrahydrofolate is bound by residues E243 and 351-353 (SPF).

This sequence belongs to the SHMT family. In terms of assembly, homodimer. It depends on pyridoxal 5'-phosphate as a cofactor.

It localises to the cytoplasm. It catalyses the reaction (6R)-5,10-methylene-5,6,7,8-tetrahydrofolate + glycine + H2O = (6S)-5,6,7,8-tetrahydrofolate + L-serine. It participates in one-carbon metabolism; tetrahydrofolate interconversion. It functions in the pathway amino-acid biosynthesis; glycine biosynthesis; glycine from L-serine: step 1/1. In terms of biological role, catalyzes the reversible interconversion of serine and glycine with tetrahydrofolate (THF) serving as the one-carbon carrier. This reaction serves as the major source of one-carbon groups required for the biosynthesis of purines, thymidylate, methionine, and other important biomolecules. Also exhibits THF-independent aldolase activity toward beta-hydroxyamino acids, producing glycine and aldehydes, via a retro-aldol mechanism. The sequence is that of Serine hydroxymethyltransferase from Fervidobacterium nodosum (strain ATCC 35602 / DSM 5306 / Rt17-B1).